We begin with the raw amino-acid sequence, 188 residues long: Guanylate kinase (188 aa).

Residues 2–183 (TKLIIISAPS…CVEQIRKAIA (182 aa)) enclose the Guanylate kinase-like domain. 9–16 (APSGTGKS) serves as a coordination point for ATP.

This sequence belongs to the guanylate kinase family.

The protein resides in the cytoplasm. It catalyses the reaction GMP + ATP = GDP + ADP. Essential for recycling GMP and indirectly, cGMP. This is Guanylate kinase from Porphyromonas gingivalis (strain ATCC BAA-308 / W83).